Consider the following 319-residue polypeptide: Pyrroline-5-carboxylate reductase 1, mitochondrial (319 aa).

Serine 2 is subject to N-acetylserine. Residues 6-11 and serine 34 each bind NADP(+); that span reads IGAGQL. NADPH-binding residues include alanine 8, glutamine 10, leucine 11, serine 34, aspartate 36, asparagine 56, valine 70, lysine 71, and alanine 97. Residues asparagine 56, 69–72, and 95–97 each bind NADP(+); these read AVKP and CAA. Glutamate 164 is an L-proline binding site. Asparagine 230 is an NADPH binding site. L-proline-binding residues include alanine 237 and threonine 238. Serine 278 and serine 301 each carry phosphoserine. The segment at 294–319 is disordered; the sequence is SPAGTALSPSGHTKLLPRSLAPAGKD.

The protein belongs to the pyrroline-5-carboxylate reductase family. Homodecamer; composed of 5 homodimers. Interacts with LTO1.

Its subcellular location is the mitochondrion. It catalyses the reaction L-proline + NADP(+) = (S)-1-pyrroline-5-carboxylate + NADPH + 2 H(+). The enzyme catalyses L-proline + NAD(+) = (S)-1-pyrroline-5-carboxylate + NADH + 2 H(+). It functions in the pathway amino-acid biosynthesis; L-proline biosynthesis; L-proline from L-glutamate 5-semialdehyde: step 1/1. With respect to regulation, subject to competitive inhibition by the reaction product proline. Subject to competitive inhibition by stearoyl coenzyme A. Functionally, oxidoreductase that catalyzes the last step in proline biosynthesis, which corresponds to the reduction of pyrroline-5-carboxylate to L-proline using NAD(P)H. At physiologic concentrations, has higher specific activity in the presence of NADH. Involved in the cellular response to oxidative stress. The chain is Pyrroline-5-carboxylate reductase 1, mitochondrial from Homo sapiens (Human).